The sequence spans 283 residues: Probable voltage-dependent anion-selective channel (283 aa).

Belongs to the eukaryotic mitochondrial porin family.

Its subcellular location is the mitochondrion outer membrane. Its function is as follows. Forms a channel through the cell membrane that allows diffusion of small hydrophilic molecules. Plays a role in maintaining mitochondrial morphology. The sequence is that of Probable voltage-dependent anion-selective channel from Caenorhabditis elegans.